Consider the following 218-residue polypeptide: Thiopurine S-methyltransferase (218 aa).

Positions 10, 45, 66, and 123 each coordinate S-adenosyl-L-methionine.

Belongs to the class I-like SAM-binding methyltransferase superfamily. TPMT family.

It is found in the cytoplasm. The enzyme catalyses S-adenosyl-L-methionine + a thiopurine = S-adenosyl-L-homocysteine + a thiopurine S-methylether.. This Shewanella putrefaciens (strain CN-32 / ATCC BAA-453) protein is Thiopurine S-methyltransferase.